A 1132-amino-acid polypeptide reads, in one-letter code: Mediator of RNA polymerase II transcription subunit 5 (1132 aa).

Basic and acidic residues predominate over residues K998 to P1023. Residues K998–A1070 form a disordered region. Residues Y1047–D1057 are compositionally biased toward acidic residues.

Belongs to the Mediator complex subunit 5 family. Component of the Mediator complex, which is composed of at least 21 subunits that form three structurally distinct submodules. The Mediator head module contains MED6, MED8, MED11, SRB4/MED17, SRB5/MED18, ROX3/MED19, SRB2/MED20 and SRB6/MED22, the middle module contains MED1, MED4, NUT1/MED5, MED7, CSE2/MED9, NUT2/MED10, SRB7/MED21 and SOH1/MED31, and the tail module contains MED2, PGD1/MED3, RGR1/MED14, GAL11/MED15 and SIN4/MED16. The head and the middle modules interact directly with RNA polymerase II, whereas the elongated tail module interacts with gene-specific regulatory proteins.

The protein resides in the nucleus. Its function is as follows. Component of the Mediator complex, a coactivator involved in the regulated transcription of nearly all RNA polymerase II-dependent genes. Mediator functions as a bridge to convey information from gene-specific regulatory proteins to the basal RNA polymerase II transcription machinery. The Mediator complex, having a compact conformation in its free form, is recruited to promoters by direct interactions with regulatory proteins and serves for the assembly of a functional preinitiation complex with RNA polymerase II and the general transcription factors. The Mediator complex unfolds to an extended conformation and partially surrounds RNA polymerase II, specifically interacting with the unphosphorylated form of the C-terminal domain (CTD) of RNA polymerase II. The Mediator complex dissociates from the RNA polymerase II holoenzyme and stays at the promoter when transcriptional elongation begins. In Saccharomyces cerevisiae (strain ATCC 204508 / S288c) (Baker's yeast), this protein is Mediator of RNA polymerase II transcription subunit 5 (NUT1).